Reading from the N-terminus, the 96-residue chain is ESAT-6-like protein EsxR (96 aa).

Belongs to the WXG100 family. ESAT-6 subfamily.

It localises to the secreted. In Mycobacterium leprae (strain TN), this protein is ESAT-6-like protein EsxR.